Reading from the N-terminus, the 497-residue chain is Lysine--tRNA ligase (497 aa).

The Mg(2+) site is built by Glu-409 and Glu-416.

This sequence belongs to the class-II aminoacyl-tRNA synthetase family. Homodimer. It depends on Mg(2+) as a cofactor.

The protein resides in the cytoplasm. It catalyses the reaction tRNA(Lys) + L-lysine + ATP = L-lysyl-tRNA(Lys) + AMP + diphosphate. This is Lysine--tRNA ligase from Streptococcus pyogenes serotype M6 (strain ATCC BAA-946 / MGAS10394).